The sequence spans 463 residues: MFS-type transporter criB (463 aa).

Helical transmembrane passes span 5–27 (LVLS…SGIM), 46–66 (MVGT…LTAG), 83–103 (VFVV…MLLI), 106–126 (LVTG…QAEI), 141–161 (LMLA…SFVN), 168–188 (MPLA…YFLP), 256–276 (LFLG…VINY), 293–313 (IFLS…ALFF), 323–343 (LMMA…LTAA), 355–375 (VAMI…LSWV), and 402–422 (FYFL…FLYP).

The protein belongs to the major facilitator superfamily. Sugar transporter (TC 2.A.1.1) family.

It is found in the membrane. Functionally, MFS-type transporter; part of the gene cluster that mediates the biosynthesis of echinulin family alkaloid. This chain is MFS-type transporter criB, found in Aspergillus cristatus (Chinese Fuzhuan brick tea-fermentation fungus).